The following is a 368-amino-acid chain: Putative phospho-2-dehydro-3-deoxyheptonate aldolase (368 aa).

This sequence belongs to the class-I DAHP synthase family.

The enzyme catalyses D-erythrose 4-phosphate + phosphoenolpyruvate + H2O = 7-phospho-2-dehydro-3-deoxy-D-arabino-heptonate + phosphate. It participates in metabolic intermediate biosynthesis; chorismate biosynthesis; chorismate from D-erythrose 4-phosphate and phosphoenolpyruvate: step 1/7. Stereospecific condensation of phosphoenolpyruvate (PEP) and D-erythrose-4-phosphate (E4P) giving rise to 3-deoxy-D-arabino-heptulosonate-7-phosphate (DAHP). In Schizosaccharomyces pombe (strain 972 / ATCC 24843) (Fission yeast), this protein is Putative phospho-2-dehydro-3-deoxyheptonate aldolase.